The primary structure comprises 74 residues: Cytochrome c oxidase subunit 2 (74 aa).

Residues 1-14 are Mitochondrial intermembrane-facing; that stretch reads MAHPSQLGLQDAAS. A helical transmembrane segment spans residues 15-45; sequence PVMEELLHFHDHALMIVFLISTLVLYIIVAM. The Mitochondrial matrix portion of the chain corresponds to 46-74; sequence VSTKLTDKYTIDSQEIEIVWTVLPAVILI.

Belongs to the cytochrome c oxidase subunit 2 family. In terms of assembly, component of the cytochrome c oxidase (complex IV, CIV), a multisubunit enzyme composed of 14 subunits. The complex is composed of a catalytic core of 3 subunits MT-CO1, MT-CO2 and MT-CO3, encoded in the mitochondrial DNA, and 11 supernumerary subunits COX4I, COX5A, COX5B, COX6A, COX6B, COX6C, COX7A, COX7B, COX7C, COX8 and NDUFA4, which are encoded in the nuclear genome. The complex exists as a monomer or a dimer and forms supercomplexes (SCs) in the inner mitochondrial membrane with NADH-ubiquinone oxidoreductase (complex I, CI) and ubiquinol-cytochrome c oxidoreductase (cytochrome b-c1 complex, complex III, CIII), resulting in different assemblies (supercomplex SCI(1)III(2)IV(1) and megacomplex MCI(2)III(2)IV(2)). Found in a complex with TMEM177, COA6, COX18, COX20, SCO1 and SCO2. Interacts with TMEM177 in a COX20-dependent manner. Interacts with COX20. Interacts with COX16. Cu cation is required as a cofactor.

It is found in the mitochondrion inner membrane. It carries out the reaction 4 Fe(II)-[cytochrome c] + O2 + 8 H(+)(in) = 4 Fe(III)-[cytochrome c] + 2 H2O + 4 H(+)(out). Component of the cytochrome c oxidase, the last enzyme in the mitochondrial electron transport chain which drives oxidative phosphorylation. The respiratory chain contains 3 multisubunit complexes succinate dehydrogenase (complex II, CII), ubiquinol-cytochrome c oxidoreductase (cytochrome b-c1 complex, complex III, CIII) and cytochrome c oxidase (complex IV, CIV), that cooperate to transfer electrons derived from NADH and succinate to molecular oxygen, creating an electrochemical gradient over the inner membrane that drives transmembrane transport and the ATP synthase. Cytochrome c oxidase is the component of the respiratory chain that catalyzes the reduction of oxygen to water. Electrons originating from reduced cytochrome c in the intermembrane space (IMS) are transferred via the dinuclear copper A center (CU(A)) of subunit 2 and heme A of subunit 1 to the active site in subunit 1, a binuclear center (BNC) formed by heme A3 and copper B (CU(B)). The BNC reduces molecular oxygen to 2 water molecules using 4 electrons from cytochrome c in the IMS and 4 protons from the mitochondrial matrix. The sequence is that of Cytochrome c oxidase subunit 2 (mt-co2) from Megalops atlanticus (Tarpon).